The following is a 354-amino-acid chain: Probable disease resistance protein At5g45490 (354 aa).

The stretch at 33–53 (AKGNLEKKRDDNEEEERLKTE) forms a coiled coil. In terms of domain architecture, NB-ARC spans 45 to 122 (EEEERLKTES…VYAPRVWVSM (78 aa)). 91-98 (GEYGVGKT) contributes to the ATP binding site. Residues 328–354 (DDEVGPVGSTHGQTDSSNRQPANQASS) form a disordered region. Positions 337 to 354 (THGQTDSSNRQPANQASS) are enriched in polar residues.

In terms of biological role, possible disease resistance protein. This is Probable disease resistance protein At5g45490 from Arabidopsis thaliana (Mouse-ear cress).